The primary structure comprises 526 residues: Tyrosine-protein kinase transforming protein Src (526 aa).

The segment at 1–52 is disordered; it reads MGSSKSKPKDPSQRRHSLEPPDSTHHGGFPASQTPDETAAPDAHRNPSRSFG. Gly-2 carries the N-myristoyl glycine; by host lipid modification. Residues 7–25 are compositionally biased toward basic and acidic residues; the sequence is KPKDPSQRRHSLEPPDSTH. 2 SH3 domains span residues 71–139 and 81–142; these read TSPQ…YVAP and GGVT…PSDS. The SH2 domain occupies 148–245; sequence WYFGKITRRE…GLCHRLANVC (98 aa). In terms of domain architecture, Protein kinase spans 267-517; the sequence is LRLEAKLGQG…TFKYLQAQLL (251 aa). ATP contacts are provided by residues 273–281 and Lys-295; that span reads LGQGCFGEV. The active-site Proton acceptor is Asp-386. Tyr-416 carries the post-translational modification Phosphotyrosine; by autocatalysis.

The protein belongs to the protein kinase superfamily. Tyr protein kinase family. SRC subfamily. As to quaternary structure, homodimer. Post-translationally, the phosphorylated form is termed pp60v-src.

The enzyme catalyses L-tyrosyl-[protein] + ATP = O-phospho-L-tyrosyl-[protein] + ADP + H(+). This phosphoprotein, required for both the initiation and the maintenance of neoplastic transformation, is a protein kinase that catalyzes the phosphorylation of tyrosine residues in vitro. The chain is Tyrosine-protein kinase transforming protein Src (V-SRC) from Gallus gallus (Chicken).